Reading from the N-terminus, the 72-residue chain is Translation initiation factor IF-1 (72 aa).

Residues 1–72 (MAKTDLLEVQ…ERGRIVFRHK (72 aa)) form the S1-like domain.

This sequence belongs to the IF-1 family. Component of the 30S ribosomal translation pre-initiation complex which assembles on the 30S ribosome in the order IF-2 and IF-3, IF-1 and N-formylmethionyl-tRNA(fMet); mRNA recruitment can occur at any time during PIC assembly.

The protein resides in the cytoplasm. In terms of biological role, one of the essential components for the initiation of protein synthesis. Stabilizes the binding of IF-2 and IF-3 on the 30S subunit to which N-formylmethionyl-tRNA(fMet) subsequently binds. Helps modulate mRNA selection, yielding the 30S pre-initiation complex (PIC). Upon addition of the 50S ribosomal subunit IF-1, IF-2 and IF-3 are released leaving the mature 70S translation initiation complex. The protein is Translation initiation factor IF-1 of Spiroplasma kunkelii.